A 239-amino-acid polypeptide reads, in one-letter code: MTEPVYKRILLKLSGEALMGDQGAGIDAEILKRLATEIDELCQAGVEVGLVIGGGNIVRGAEKASEGLDRVTGDHMGMLATVINALAMQDALENLGRPVRVMSALKINQVCEDYIRRRAVRHLEKGRVVVFAAGTGNPFFTTDSAASLRAIEIGADLLIKATKVDGVYSADPVKNPEAKFYTRLTYDEALDQRLNVMDTTALVLCRDYKMPLRVMNVFRQGAVMRLIRGDDIGSLLVTG.

12 to 15 (KLSG) is a binding site for ATP. The segment at 20–25 (GDQGAG) is involved in allosteric activation by GTP. A UMP-binding site is contributed by Gly-54. ATP-binding residues include Gly-55 and Arg-59. Residues Asp-74 and 135 to 142 (TGNPFFTT) each bind UMP. The ATP site is built by Thr-162, Tyr-168, and Asp-171.

Belongs to the UMP kinase family. In terms of assembly, homohexamer.

The protein localises to the cytoplasm. It carries out the reaction UMP + ATP = UDP + ADP. It participates in pyrimidine metabolism; CTP biosynthesis via de novo pathway; UDP from UMP (UMPK route): step 1/1. With respect to regulation, allosterically activated by GTP. Inhibited by UTP. In terms of biological role, catalyzes the reversible phosphorylation of UMP to UDP. The chain is Uridylate kinase from Methylococcus capsulatus (strain ATCC 33009 / NCIMB 11132 / Bath).